Consider the following 683-residue polypeptide: Protein kinase C eta type (683 aa).

Positions 1-118 (MSSGTMKFNG…LRTTGASDTF (118 aa)) constitute a C2 domain. 2 positions are modified to phosphoserine; by autocatalysis: S28 and S32. 2 consecutive Phorbol-ester/DAG-type zinc fingers follow at residues 171 to 222 (GHKF…VTAC) and 245 to 295 (PHKF…APNC). S317 is modified (phosphoserine). The segment at 320–342 (SKLVSRSTLRRQGKESSKEGNGI) is disordered. The 260-residue stretch at 355–614 (FEFIRVLGKG…EHAILRHPFF (260 aa)) folds into the Protein kinase domain. ATP contacts are provided by residues 361 to 369 (LGKGSFGKV) and K384. D479 (proton acceptor) is an active-site residue. T513 bears the Phosphothreonine; by PDPK1 mark. Residues 615–683 (KEIDWAQLNH…FSYVSPELQP (69 aa)) enclose the AGC-kinase C-terminal domain. Phosphothreonine is present on T656. Residue S675 is modified to Phosphoserine.

Belongs to the protein kinase superfamily. AGC Ser/Thr protein kinase family. PKC subfamily. Interacts with FYN. Interacts with RALA. Interacts with DGKQ. Interacts with PRKCH upstream open reading frame 2; the interaction leads to inhibition of kinase activity. In terms of tissue distribution, most abundant in lung, less in heart and skin.

Its subcellular location is the cytoplasm. It catalyses the reaction L-seryl-[protein] + ATP = O-phospho-L-seryl-[protein] + ADP + H(+). It carries out the reaction L-threonyl-[protein] + ATP = O-phospho-L-threonyl-[protein] + ADP + H(+). Novel PKCs (PRKCD, PRKCE, PRKCH and PRKCQ) are calcium-insensitive, but activated by diacylglycerol (DAG) and phosphatidylserine. Three specific sites; Thr-513 (activation loop of the kinase domain), Thr-656 (turn motif) and Ser-675 (hydrophobic region), need to be phosphorylated for its full activation. Inhibited by PRKCH upstream open reading frame 2. Its function is as follows. Calcium-independent, phospholipid- and diacylglycerol (DAG)-dependent serine/threonine-protein kinase that is involved in the regulation of cell differentiation in keratinocytes and pre-B cell receptor, mediates regulation of epithelial tight junction integrity and foam cell formation, and is required for glioblastoma proliferation and apoptosis prevention in MCF-7 cells. In keratinocytes, binds and activates the tyrosine kinase FYN, which in turn blocks epidermal growth factor receptor (EGFR) signaling and leads to keratinocyte growth arrest and differentiation. Associates with the cyclin CCNE1-CDK2-CDKN1B complex and inhibits CDK2 kinase activity, leading to RB1 dephosphorylation and thereby G1 arrest in keratinocytes. In association with RALA activates actin depolymerization, which is necessary for keratinocyte differentiation. In the pre-B cell receptor signaling, functions downstream of BLNK by up-regulating IRF4, which in turn activates L chain gene rearrangement. Regulates epithelial tight junctions (TJs) by phosphorylating occludin (OCLN) on threonine residues, which is necessary for the assembly and maintenance of TJs. In association with PLD2 and via TLR4 signaling, is involved in lipopolysaccharide (LPS)-induced RGS2 down-regulation and foam cell formation. Upon PMA stimulation, mediates glioblastoma cell proliferation by activating the mTOR pathway, the PI3K/AKT pathway and the ERK1-dependent phosphorylation of ELK1. Involved in the protection of glioblastoma cells from irradiation-induced apoptosis by preventing caspase-9 activation. In camptothecin-treated MCF-7 cells, regulates NF-kappa-B upstream signaling by activating IKBKB, and confers protection against DNA damage-induced apoptosis. Promotes oncogenic functions of ATF2 in the nucleus while blocking its apoptotic function at mitochondria. Phosphorylates ATF2 which promotes its nuclear retention and transcriptional activity and negatively regulates its mitochondrial localization. The polypeptide is Protein kinase C eta type (PRKCH) (Homo sapiens (Human)).